We begin with the raw amino-acid sequence, 241 residues long: Triosephosphate isomerase (241 aa).

9-11 (NWK) is a binding site for substrate. His96 serves as the catalytic Electrophile. Glu165 functions as the Proton acceptor in the catalytic mechanism. Residues Gly171, Ser204, and 225–226 (GG) each bind substrate.

This sequence belongs to the triosephosphate isomerase family. As to quaternary structure, homodimer.

The protein localises to the cytoplasm. The catalysed reaction is D-glyceraldehyde 3-phosphate = dihydroxyacetone phosphate. The protein operates within carbohydrate biosynthesis; gluconeogenesis. It participates in carbohydrate degradation; glycolysis; D-glyceraldehyde 3-phosphate from glycerone phosphate: step 1/1. In terms of biological role, involved in the gluconeogenesis. Catalyzes stereospecifically the conversion of dihydroxyacetone phosphate (DHAP) to D-glyceraldehyde-3-phosphate (G3P). This Prochlorococcus marinus (strain MIT 9312) protein is Triosephosphate isomerase.